The primary structure comprises 101 residues: ATP-dependent Clp protease adapter protein ClpS (101 aa).

Belongs to the ClpS family. As to quaternary structure, binds to the N-terminal domain of the chaperone ClpA.

Functionally, involved in the modulation of the specificity of the ClpAP-mediated ATP-dependent protein degradation. The protein is ATP-dependent Clp protease adapter protein ClpS of Corynebacterium jeikeium (strain K411).